Consider the following 178-residue polypeptide: ATP-dependent protease subunit HslV (178 aa).

Threonine 7 is an active-site residue. The Na(+) site is built by glycine 162, cysteine 165, and threonine 168.

Belongs to the peptidase T1B family. HslV subfamily. A double ring-shaped homohexamer of HslV is capped on each side by a ring-shaped HslU homohexamer. The assembly of the HslU/HslV complex is dependent on binding of ATP.

The protein localises to the cytoplasm. The catalysed reaction is ATP-dependent cleavage of peptide bonds with broad specificity.. Its activity is regulated as follows. Allosterically activated by HslU binding. Its function is as follows. Protease subunit of a proteasome-like degradation complex believed to be a general protein degrading machinery. This Burkholderia vietnamiensis (strain G4 / LMG 22486) (Burkholderia cepacia (strain R1808)) protein is ATP-dependent protease subunit HslV.